We begin with the raw amino-acid sequence, 87 residues long: MVEVQKEQVYVIPLRDVKRVPCYKRANAAIKDIRGYLEHHMKSDDVKLDKSINELVWARGSQKPPRRIRVRAMKFEDGQVQAELAEE.

Belongs to the eukaryotic ribosomal protein eL31 family.

The chain is Large ribosomal subunit protein eL31 from Methanocorpusculum labreanum (strain ATCC 43576 / DSM 4855 / Z).